An 860-amino-acid chain; its full sequence is Tetratricopeptide repeat protein 13 (860 aa).

TPR repeat units follow at residues 143-176, 216-248, 249-282, 284-316, 317-350, 352-384, and 386-418; these read TNEELAIAYVLIGSGLYDEAIRHFSTMLQEEPDL, PEVFEQRAEILSPLGRINEAVNDLTKAIQLQPS, ARLYRHRGTLYFISEDYATAHEDFQQSLELNKNQ, IAMLYKGLTFFHRGLLKEAIESFKEALKQKVDF, IDAYKSLGQAYRELGNFEAATESFQKALLLNQNH, QTLQLRGMMLYHHGSLQEALKNFKRCLQLEPYN, and VCQYMKGLSHVAMGQFYEGIKAQTKVMLNDPLP.

The chain is Tetratricopeptide repeat protein 13 (TTC13) from Homo sapiens (Human).